The primary structure comprises 412 residues: Alanyl-tRNA editing protein Aarsd1 (412 aa).

Zn(2+) is bound by residues His109 and His113. Ser174 bears the Phosphoserine mark. The Zn(2+) site is built by Cys209 and His213.

Belongs to the class-II aminoacyl-tRNA synthetase family. Alax-L subfamily. Zn(2+) serves as cofactor.

Its subcellular location is the cytoplasm. Its function is as follows. Functions in trans to edit the amino acid moiety from incorrectly charged tRNA(Ala). The chain is Alanyl-tRNA editing protein Aarsd1 (AARSD1) from Homo sapiens (Human).